We begin with the raw amino-acid sequence, 221 residues long: 7-cyano-7-deazaguanine synthase (221 aa).

Position 12–22 (12–22) interacts with ATP; that stretch reads FSGGQDSTTCL. Residues cysteine 190, cysteine 199, cysteine 202, and cysteine 205 each coordinate Zn(2+).

Belongs to the QueC family. As to quaternary structure, homodimer. The cofactor is Zn(2+).

It carries out the reaction 7-carboxy-7-deazaguanine + NH4(+) + ATP = 7-cyano-7-deazaguanine + ADP + phosphate + H2O + H(+). It participates in purine metabolism; 7-cyano-7-deazaguanine biosynthesis. Catalyzes the ATP-dependent conversion of 7-carboxy-7-deazaguanine (CDG) to 7-cyano-7-deazaguanine (preQ(0)). The protein is 7-cyano-7-deazaguanine synthase of Clostridium novyi (strain NT).